Here is a 445-residue protein sequence, read N- to C-terminus: Glycine--tRNA ligase (445 aa).

The substrate site is built by arginine 97 and glutamate 145. Residues 177–179, 187–192, 262–263, and 308–311 contribute to the ATP site; these read RNE, FRTCEF, EV, and GLTR. 192–196 is a substrate binding site; that stretch reads FEQME. 304–308 is a substrate binding site; it reads ETSAG.

Belongs to the class-II aminoacyl-tRNA synthetase family. In terms of assembly, homodimer.

The protein localises to the cytoplasm. It catalyses the reaction tRNA(Gly) + glycine + ATP = glycyl-tRNA(Gly) + AMP + diphosphate. In terms of biological role, catalyzes the attachment of glycine to tRNA(Gly). This Borreliella burgdorferi (strain ATCC 35210 / DSM 4680 / CIP 102532 / B31) (Borrelia burgdorferi) protein is Glycine--tRNA ligase.